The following is a 288-amino-acid chain: Nucleotide-binding protein Neut_1559 (288 aa).

Residue 8 to 15 (GLSGSGKS) coordinates ATP. Position 57–60 (57–60 (DMRS)) interacts with GTP.

The protein belongs to the RapZ-like family.

In terms of biological role, displays ATPase and GTPase activities. The sequence is that of Nucleotide-binding protein Neut_1559 from Nitrosomonas eutropha (strain DSM 101675 / C91 / Nm57).